A 349-amino-acid polypeptide reads, in one-letter code: Delta(7)-sterol 5(6)-desaturase ERG3A (349 aa).

A run of 3 helical transmembrane segments spans residues 84–104 (ITWI…YIFI), 124–144 (IIAA…FFLL), and 162–182 (LWYD…CIYW). The 127-residue stretch at 170-296 (PLFLLFTDFC…FTAFDRMGGT (127 aa)) folds into the Fatty acid hydroxylase domain. Residues 184 to 188 (HRWLH) carry the Histidine box-1 motif. The Histidine box-2 signature appears at 197–201 (HKLHH). The chain crosses the membrane as a helical span at residues 227–247 (HIFPFIFPLQKMAYVALFVFV). The short motif at 272-276 (HSLHH) is the Histidine box-3 element.

This sequence belongs to the sterol desaturase family.

It is found in the endoplasmic reticulum membrane. It catalyses the reaction episterol + 2 Fe(II)-[cytochrome b5] + O2 + 2 H(+) = 5-dehydroepisterol + 2 Fe(III)-[cytochrome b5] + 2 H2O. It functions in the pathway steroid metabolism; ergosterol biosynthesis. Its function is as follows. C-5 sterol desaturase; part of the third module of ergosterol biosynthesis pathway that includes the late steps of the pathway. ERG3A and ERG3BB catalyze the introduction of a C-5 double bond in the B ring to produce 5-dehydroepisterol. The third module or late pathway involves the ergosterol synthesis itself through consecutive reactions that mainly occur in the endoplasmic reticulum (ER) membrane. Firstly, the squalene synthase ERG9 catalyzes the condensation of 2 farnesyl pyrophosphate moieties to form squalene, which is the precursor of all steroids. Squalene synthase is crucial for balancing the incorporation of farnesyl diphosphate (FPP) into sterol and nonsterol isoprene synthesis. Secondly, squalene is converted into lanosterol by the consecutive action of the squalene epoxidase ERG1 and the lanosterol synthase ERG7. Then, the delta(24)-sterol C-methyltransferase ERG6 methylates lanosterol at C-24 to produce eburicol. Eburicol is the substrate of the sterol 14-alpha demethylase encoded by CYP51A, CYP51B and CYP51C, to yield 4,4,24-trimethyl ergosta-8,14,24(28)-trienol. CYP51B encodes the enzyme primarily responsible for sterol 14-alpha-demethylation, and plays an essential role in ascospore formation. CYP51A encodes an additional sterol 14-alpha-demethylase, induced on ergosterol depletion and responsible for the intrinsic variation in azole sensitivity. The third CYP51 isoform, CYP51C, does not encode a sterol 14-alpha-demethylase, but is required for full virulence on host wheat ears. The C-14 reductase ERG24 then reduces the C14=C15 double bond which leads to 4,4-dimethylfecosterol. A sequence of further demethylations at C-4, involving the C-4 demethylation complex containing the C-4 methylsterol oxidases ERG25, the sterol-4-alpha-carboxylate 3-dehydrogenase ERG26 and the 3-keto-steroid reductase ERG27, leads to the production of fecosterol via 4-methylfecosterol. ERG28 has a role as a scaffold to help anchor ERG25, ERG26 and ERG27 to the endoplasmic reticulum. The C-8 sterol isomerase ERG2 then catalyzes the reaction which results in unsaturation at C-7 in the B ring of sterols and thus converts fecosterol to episterol. The sterol-C5-desaturases ERG3A and ERG3BB then catalyze the introduction of a C-5 double bond in the B ring to produce 5-dehydroepisterol. The C-22 sterol desaturases ERG5A and ERG5B further convert 5-dehydroepisterol into ergosta-5,7,22,24(28)-tetraen-3beta-ol by forming the C-22(23) double bond in the sterol side chain. Finally, ergosta-5,7,22,24(28)-tetraen-3beta-ol is substrate of the C-24(28) sterol reductase ERG4 to produce ergosterol. This Gibberella zeae (strain ATCC MYA-4620 / CBS 123657 / FGSC 9075 / NRRL 31084 / PH-1) (Wheat head blight fungus) protein is Delta(7)-sterol 5(6)-desaturase ERG3A.